Here is a 199-residue protein sequence, read N- to C-terminus: Protein GrpE (199 aa).

Positions 20 to 52 (YKVENEILEEETDEESQHQEPALGHPSYTALEE) are disordered.

It belongs to the GrpE family. In terms of assembly, homodimer.

The protein resides in the cytoplasm. Functionally, participates actively in the response to hyperosmotic and heat shock by preventing the aggregation of stress-denatured proteins, in association with DnaK and GrpE. It is the nucleotide exchange factor for DnaK and may function as a thermosensor. Unfolded proteins bind initially to DnaJ; upon interaction with the DnaJ-bound protein, DnaK hydrolyzes its bound ATP, resulting in the formation of a stable complex. GrpE releases ADP from DnaK; ATP binding to DnaK triggers the release of the substrate protein, thus completing the reaction cycle. Several rounds of ATP-dependent interactions between DnaJ, DnaK and GrpE are required for fully efficient folding. The chain is Protein GrpE from Legionella pneumophila (strain Corby).